Consider the following 475-residue polypeptide: tRNA-2-methylthio-N(6)-dimethylallyladenosine synthase (475 aa).

A compositionally biased stretch (basic and acidic residues) spans Met-1–Gly-10. The disordered stretch occupies residues Met-1 to Thr-22. Positions Gly-27–Ala-144 constitute an MTTase N-terminal domain. Residues Cys-36, Cys-73, Cys-107, Cys-181, Cys-185, and Cys-188 each coordinate [4Fe-4S] cluster. Residues Arg-167–Ala-400 form the Radical SAM core domain. Residues Gln-403–Gly-466 enclose the TRAM domain.

This sequence belongs to the methylthiotransferase family. MiaB subfamily. Monomer. Requires [4Fe-4S] cluster as cofactor.

It is found in the cytoplasm. It carries out the reaction N(6)-dimethylallyladenosine(37) in tRNA + (sulfur carrier)-SH + AH2 + 2 S-adenosyl-L-methionine = 2-methylsulfanyl-N(6)-dimethylallyladenosine(37) in tRNA + (sulfur carrier)-H + 5'-deoxyadenosine + L-methionine + A + S-adenosyl-L-homocysteine + 2 H(+). Its function is as follows. Catalyzes the methylthiolation of N6-(dimethylallyl)adenosine (i(6)A), leading to the formation of 2-methylthio-N6-(dimethylallyl)adenosine (ms(2)i(6)A) at position 37 in tRNAs that read codons beginning with uridine. The protein is tRNA-2-methylthio-N(6)-dimethylallyladenosine synthase of Bordetella bronchiseptica (strain ATCC BAA-588 / NCTC 13252 / RB50) (Alcaligenes bronchisepticus).